Reading from the N-terminus, the 424-residue chain is Serine--tRNA ligase (424 aa).

232–234 contributes to the L-serine binding site; that stretch reads TAE. Residue 263 to 265 participates in ATP binding; sequence RQE. Residue E286 coordinates L-serine. 350 to 353 lines the ATP pocket; it reads EIGS. S386 contributes to the L-serine binding site.

It belongs to the class-II aminoacyl-tRNA synthetase family. Type-1 seryl-tRNA synthetase subfamily. In terms of assembly, homodimer. The tRNA molecule binds across the dimer.

The protein resides in the cytoplasm. It carries out the reaction tRNA(Ser) + L-serine + ATP = L-seryl-tRNA(Ser) + AMP + diphosphate + H(+). The catalysed reaction is tRNA(Sec) + L-serine + ATP = L-seryl-tRNA(Sec) + AMP + diphosphate + H(+). The protein operates within aminoacyl-tRNA biosynthesis; selenocysteinyl-tRNA(Sec) biosynthesis; L-seryl-tRNA(Sec) from L-serine and tRNA(Sec): step 1/1. Functionally, catalyzes the attachment of serine to tRNA(Ser). Is also able to aminoacylate tRNA(Sec) with serine, to form the misacylated tRNA L-seryl-tRNA(Sec), which will be further converted into selenocysteinyl-tRNA(Sec). This Aster yellows witches'-broom phytoplasma (strain AYWB) protein is Serine--tRNA ligase.